The following is a 555-amino-acid chain: DNA-directed primase/polymerase protein (555 aa).

The stretch at 1–22 forms a coiled coil; that stretch reads MKRKWEATLKQIEERASHYERK. Substrate contacts are provided by residues arginine 76, 114–116, and 165–169; these read DLE and KFSRH. Positions 114 and 116 each coordinate Mn(2+). The interval 210-230 is disordered; it reads ETTGHEFTHFSETPSEQGTCF. Residues 219–230 show a composition bias toward polar residues; it reads FSETPSEQGTCF. Residue serine 255 is modified to Phosphoserine. Residues 288-291 and lysine 297 each bind substrate; that span reads RNFR. The Zn(2+) site is built by cysteine 418, histidine 425, cysteine 445, and cysteine 450. The Zinc knuckle motif motif lies at 418 to 451; it reads CENIGRAHRSNNIMILVDLKNEVWYQKCHDPVCK. The interval 480–503 is disordered; sequence TDTTADTETKSPHGPSSSVLSKGA. The interaction with RPA1 stretch occupies residues 480-555; that stretch reads TDTTADTETK…DELLIEVLQE (76 aa). Short sequence motifs (RPA1-binding motif) lie at residues 509–523 and 543–551; these read WDNG…EATE and EIPDELLIE.

This sequence belongs to the eukaryotic-type primase small subunit family. In terms of assembly, interacts with RPA1; leading to recruitment to chromatin and stimulate DNA primase activity. Interacts with SSBP1. Interacts with POLDIP2; leading to enhance DNA polymerase activity. It depends on Mn(2+) as a cofactor.

The protein localises to the nucleus. It is found in the mitochondrion matrix. The protein resides in the chromosome. The enzyme catalyses ssDNA + n NTP = ssDNA/pppN(pN)n-1 hybrid + (n-1) diphosphate.. The catalysed reaction is DNA(n) + a 2'-deoxyribonucleoside 5'-triphosphate = DNA(n+1) + diphosphate. In terms of biological role, DNA primase and DNA polymerase required to tolerate replication-stalling lesions by bypassing them. Required to facilitate mitochondrial and nuclear replication fork progression by initiating de novo DNA synthesis using dNTPs and acting as an error-prone DNA polymerase able to bypass certain DNA lesions. Shows a high capacity to tolerate DNA damage lesions such as 8oxoG and abasic sites in DNA. Provides different translesion synthesis alternatives when DNA replication is stalled: able to synthesize DNA primers downstream of lesions, such as ultraviolet (UV) lesions, R-loops and G-quadruplexes, to allow DNA replication to continue. Can also realign primers ahead of 'unreadable lesions' such as abasic sites and 6-4 photoproduct (6-4 pyrimidine-pyrimidinone), thereby skipping the lesion. Repriming avoids fork degradation while leading to accumulation of internal ssDNA gaps behind the forks. Also able to incorporate nucleotides opposite DNA lesions such as 8oxoG, like a regular translesion synthesis DNA polymerase. Also required for reinitiating stalled forks after UV damage during nuclear DNA replication. Required for mitochondrial DNA (mtDNA) synthesis and replication, by reinitiating synthesis after UV damage or in the presence of chain-terminating nucleotides. Prevents APOBEC family-mediated DNA mutagenesis by repriming downstream of abasic site to prohibit error-prone translesion synthesis. Has non-overlapping function with POLH. In addition to its role in DNA damage response, also required to maintain efficient nuclear and mitochondrial DNA replication in unperturbed cells. This Bos taurus (Bovine) protein is DNA-directed primase/polymerase protein.